The following is a 175-amino-acid chain: Small ribosomal subunit protein uS5 (175 aa).

Residues 19-82 (WVDRLVSVNR…DDAKKNVIRV (64 aa)) form the S5 DRBM domain.

The protein belongs to the universal ribosomal protein uS5 family. Part of the 30S ribosomal subunit. Contacts proteins S4 and S8.

In terms of biological role, with S4 and S12 plays an important role in translational accuracy. Its function is as follows. Located at the back of the 30S subunit body where it stabilizes the conformation of the head with respect to the body. This Salinibacter ruber (strain DSM 13855 / M31) protein is Small ribosomal subunit protein uS5.